A 266-amino-acid polypeptide reads, in one-letter code: UPF0354 protein lwe1624 (266 aa).

This sequence belongs to the UPF0354 family.

The protein is UPF0354 protein lwe1624 of Listeria welshimeri serovar 6b (strain ATCC 35897 / DSM 20650 / CCUG 15529 / CIP 8149 / NCTC 11857 / SLCC 5334 / V8).